The sequence spans 272 residues: Large ribosomal subunit protein uL2 (272 aa).

The segment at 222 to 272 (GVAMNPIDHPLGGGEGKSSGGRAACTPWGKPEGVKTRKNKRTDKFIIKRRK) is disordered. Residues 263 to 272 (TDKFIIKRRK) show a composition bias toward basic and acidic residues.

It belongs to the universal ribosomal protein uL2 family. As to quaternary structure, part of the 50S ribosomal subunit. Forms a bridge to the 30S subunit in the 70S ribosome.

One of the primary rRNA binding proteins. Required for association of the 30S and 50S subunits to form the 70S ribosome, for tRNA binding and peptide bond formation. It has been suggested to have peptidyltransferase activity; this is somewhat controversial. Makes several contacts with the 16S rRNA in the 70S ribosome. The sequence is that of Large ribosomal subunit protein uL2 from Thermodesulfovibrio yellowstonii (strain ATCC 51303 / DSM 11347 / YP87).